The primary structure comprises 374 residues: DNA replication and repair protein RecF (374 aa).

30–37 (GENAQGKT) serves as a coordination point for ATP.

This sequence belongs to the RecF family.

The protein resides in the cytoplasm. The RecF protein is involved in DNA metabolism; it is required for DNA replication and normal SOS inducibility. RecF binds preferentially to single-stranded, linear DNA. It also seems to bind ATP. The polypeptide is DNA replication and repair protein RecF (Pediococcus pentosaceus (strain ATCC 25745 / CCUG 21536 / LMG 10740 / 183-1w)).